We begin with the raw amino-acid sequence, 246 residues long: 1-(5-phosphoribosyl)-5-[(5-phosphoribosylamino)methylideneamino] imidazole-4-carboxamide isomerase (246 aa).

Residue Asp-10 is the Proton acceptor of the active site.

It belongs to the HisA/HisF family.

It is found in the cytoplasm. It carries out the reaction 1-(5-phospho-beta-D-ribosyl)-5-[(5-phospho-beta-D-ribosylamino)methylideneamino]imidazole-4-carboxamide = 5-[(5-phospho-1-deoxy-D-ribulos-1-ylimino)methylamino]-1-(5-phospho-beta-D-ribosyl)imidazole-4-carboxamide. It participates in amino-acid biosynthesis; L-histidine biosynthesis; L-histidine from 5-phospho-alpha-D-ribose 1-diphosphate: step 4/9. The polypeptide is 1-(5-phosphoribosyl)-5-[(5-phosphoribosylamino)methylideneamino] imidazole-4-carboxamide isomerase (Corynebacterium efficiens (strain DSM 44549 / YS-314 / AJ 12310 / JCM 11189 / NBRC 100395)).